The primary structure comprises 279 residues: NH(3)-dependent NAD(+) synthetase (279 aa).

46–53 is a binding site for ATP; sequence GVSGGQDS. Asp52 is a binding site for Mg(2+). Arg139 provides a ligand contact to deamido-NAD(+). Thr159 is an ATP binding site. Position 164 (Glu164) interacts with Mg(2+). Deamido-NAD(+) is bound by residues Lys172 and Asp179. Lys188 and Thr210 together coordinate ATP. 259 to 260 serves as a coordination point for deamido-NAD(+); sequence HK.

Belongs to the NAD synthetase family. Homodimer.

The enzyme catalyses deamido-NAD(+) + NH4(+) + ATP = AMP + diphosphate + NAD(+) + H(+). Its pathway is cofactor biosynthesis; NAD(+) biosynthesis; NAD(+) from deamido-NAD(+) (ammonia route): step 1/1. Functionally, catalyzes the ATP-dependent amidation of deamido-NAD to form NAD. Uses ammonia as a nitrogen source. In Leifsonia xyli subsp. xyli (strain CTCB07), this protein is NH(3)-dependent NAD(+) synthetase.